Consider the following 247-residue polypeptide: UPF0280 protein MmarC5_0355 (247 aa).

The protein belongs to the UPF0280 family.

In Methanococcus maripaludis (strain C5 / ATCC BAA-1333), this protein is UPF0280 protein MmarC5_0355.